A 241-amino-acid polypeptide reads, in one-letter code: Uridylate kinase (241 aa).

ATP-binding positions include 10-13, Gly53, and Arg57; that span reads KLSG. Residues Asp72 and 133 to 140 each bind UMP; that span reads AGSPYFST. Asn161, Tyr167, and Asp170 together coordinate ATP.

Belongs to the UMP kinase family. As to quaternary structure, homohexamer.

The protein resides in the cytoplasm. It carries out the reaction UMP + ATP = UDP + ADP. Its pathway is pyrimidine metabolism; CTP biosynthesis via de novo pathway; UDP from UMP (UMPK route): step 1/1. With respect to regulation, inhibited by UTP. Its function is as follows. Catalyzes the reversible phosphorylation of UMP to UDP. The protein is Uridylate kinase of Onion yellows phytoplasma (strain OY-M).